Reading from the N-terminus, the 360-residue chain is Protein Wnt-2 (360 aa).

An N-terminal signal peptide occupies residues 1-25 (MNSPLRGIWLWLPLLLTWLTPEVSS). 11 cysteine pairs are disulfide-bonded: C76-C87, C127-C135, C137-C157, C206-C220, C208-C215, C278-C309, C294-C304, C308-C348, C324-C339, C326-C336, and C331-C332. S212 carries the O-palmitoleoyl serine; by PORCN lipid modification. An N-linked (GlcNAc...) asparagine glycan is attached at N295.

It belongs to the Wnt family. Palmitoleoylation is required for efficient binding to frizzled receptors. Depalmitoleoylation leads to Wnt signaling pathway inhibition.

It localises to the secreted. The protein resides in the extracellular space. Its subcellular location is the extracellular matrix. Functionally, ligand for members of the frizzled family of seven transmembrane receptors. Probable developmental protein. May be a signaling molecule which affects the development of discrete regions of tissues. Is likely to signal over only few cell diameters. The sequence is that of Protein Wnt-2 (WNT2) from Ateles geoffroyi (Black-handed spider monkey).